Reading from the N-terminus, the 283-residue chain is MRDNLFIYLQYLLPHTLTSRLVSKLADSENKIIKNHLIRLAIKKFNINLVEAKETDISKYKSFNDFFIRELKDDLRPISNDKNVISSPADGVLSQFGTITDNSLIQAKGKLFSLESLIASSSTTSFTKFATIYLSPKDYHRVHMPIDGKLTKMVYIPGKLFSVNKITTSKVDNLFAKNERLICYFDTIIGEIAVIFVGALLVAGIETVWHGKIAPNYYKDIQTWDYNSAKFNIKFNKGDILGWFNFGSTVIILTSGNNVSFKFEENKNNIKIQVNQDLALITE.

Active-site charge relay system; for autoendoproteolytic cleavage activity residues include D90, H143, and S248. The active-site Schiff-base intermediate with substrate; via pyruvic acid; for decarboxylase activity is S248. Residue S248 is modified to Pyruvic acid (Ser); by autocatalysis.

It belongs to the phosphatidylserine decarboxylase family. PSD-B subfamily. Prokaryotic type I sub-subfamily. Heterodimer of a large membrane-associated beta subunit and a small pyruvoyl-containing alpha subunit. Requires pyruvate as cofactor. Is synthesized initially as an inactive proenzyme. Formation of the active enzyme involves a self-maturation process in which the active site pyruvoyl group is generated from an internal serine residue via an autocatalytic post-translational modification. Two non-identical subunits are generated from the proenzyme in this reaction, and the pyruvate is formed at the N-terminus of the alpha chain, which is derived from the carboxyl end of the proenzyme. The autoendoproteolytic cleavage occurs by a canonical serine protease mechanism, in which the side chain hydroxyl group of the serine supplies its oxygen atom to form the C-terminus of the beta chain, while the remainder of the serine residue undergoes an oxidative deamination to produce ammonia and the pyruvoyl prosthetic group on the alpha chain. During this reaction, the Ser that is part of the protease active site of the proenzyme becomes the pyruvoyl prosthetic group, which constitutes an essential element of the active site of the mature decarboxylase.

The protein resides in the cell membrane. It catalyses the reaction a 1,2-diacyl-sn-glycero-3-phospho-L-serine + H(+) = a 1,2-diacyl-sn-glycero-3-phosphoethanolamine + CO2. It participates in phospholipid metabolism; phosphatidylethanolamine biosynthesis; phosphatidylethanolamine from CDP-diacylglycerol: step 2/2. Its function is as follows. Catalyzes the formation of phosphatidylethanolamine (PtdEtn) from phosphatidylserine (PtdSer). This Francisella tularensis subsp. mediasiatica (strain FSC147) protein is Phosphatidylserine decarboxylase proenzyme.